Reading from the N-terminus, the 238-residue chain is Ribonuclease PH (238 aa).

Residues R86 and 124-126 (GTR) each bind phosphate.

The protein belongs to the RNase PH family. As to quaternary structure, homohexameric ring arranged as a trimer of dimers.

It catalyses the reaction tRNA(n+1) + phosphate = tRNA(n) + a ribonucleoside 5'-diphosphate. Functionally, phosphorolytic 3'-5' exoribonuclease that plays an important role in tRNA 3'-end maturation. Removes nucleotide residues following the 3'-CCA terminus of tRNAs; can also add nucleotides to the ends of RNA molecules by using nucleoside diphosphates as substrates, but this may not be physiologically important. Probably plays a role in initiation of 16S rRNA degradation (leading to ribosome degradation) during starvation. This Acinetobacter baumannii (strain AB307-0294) protein is Ribonuclease PH.